The primary structure comprises 63 residues: Transmembrane protein ZNF593OS (63 aa).

The chain crosses the membrane as a helical span at residues 30 to 50 (LAGVVATVLAVLGLGGSCYAV).

It is found in the membrane. This Homo sapiens (Human) protein is Transmembrane protein ZNF593OS.